A 295-amino-acid chain; its full sequence is Ribosome production factor 1 (295 aa).

The tract at residues 24–47 is disordered; the sequence is HEKNKERHTMRRKRAKEERENPEL. Positions 38–47 are enriched in basic and acidic residues; sequence AKEERENPEL. The Brix domain occupies 93–276; the sequence is PKIFLTTNVN…LKRLQRGIKE (184 aa). Positions 254 to 271 are RNA-binding; the sequence is VGLQELGPQFTLKLKRLQ.

Part of a complex that includes BRX1, RPF1, RPF2 and SSF1 or SSF2.

It localises to the nucleus. The protein resides in the nucleolus. In terms of biological role, essential protein. Required for biogenesis of the 60S ribosomal subunit. This Saccharomyces cerevisiae (strain ATCC 204508 / S288c) (Baker's yeast) protein is Ribosome production factor 1 (RPF1).